A 335-amino-acid polypeptide reads, in one-letter code: Sphingomyelinase C (335 aa).

The signal sequence occupies residues methionine 1–glycine 28.

Belongs to the neutral sphingomyelinase family.

The protein resides in the secreted. The enzyme catalyses a sphingomyelin + H2O = phosphocholine + an N-acylsphing-4-enine + H(+). Its function is as follows. Virulence factor that promotes intracellular proliferation by mediating the disruption of the phagocytic vacuole and the release of bacteria into the host cell cytosol. May act in concert with the phospholipases PlcA and PlcB and the hemolysin hly to mediate efficient escape from the vacuole. The protein is Sphingomyelinase C (smcL) of Listeria ivanovii.